We begin with the raw amino-acid sequence, 74 residues long: Large ribosomal subunit protein bL31 (74 aa).

Positions 16, 18, 38, and 41 each coordinate Zn(2+).

Belongs to the bacterial ribosomal protein bL31 family. Type A subfamily. In terms of assembly, part of the 50S ribosomal subunit. Requires Zn(2+) as cofactor.

Functionally, binds the 23S rRNA. In Acinetobacter baumannii (strain AB307-0294), this protein is Large ribosomal subunit protein bL31.